The following is a 493-amino-acid chain: MSLMFSSPVVTPALGSFTFSSRPRSNYIVMSAVRSNSASTCPILTKFQKDCATPTPYLRNVANAIADDMRDGLAVEGGGDLEMILTFVDALPSGNEEGLFYALDLGGTNFRVRSVQLGGKKERVLATESEQISISQKLMIGTSEELFGFIASKLANFVAKEKPGRFLLEEGRKRELGFTFSFPVKQTSIDSGTLSKWTKGFKVSGMEGKNVVACLNEAMEAHGLDMRVSALVNDGVGTLAGARYWDEDVMVGVILGTGTNACYVEQKHAIPKLRSKSSSGTTIINTEWGGFSKILPQTIFDLEMDETSLNPGEHLYEKMISGMYLGEIVRRVLLHMCETSDLFGHFAPAKLSTPLALRTEHLCKMQEDNTDDLRDVGSILYDFLDVEANMNARRRVVEVCDTVVKRGGRLAGAGIVAILEKIEKDTKRMGSGKRTVVAMDGALYEKYPQYRQYMQDALVELLGHKLASHVAIKHTKDVSGLGAALLAATNSIY.

The Hexokinase domain maps to 38–488 (ASTCPILTKF…SGLGAALLAA (451 aa)). Positions 93-232 (SGNEEGLFYA…GLDMRVSALV (140 aa)) are hexokinase small subdomain. Gly107, Thr108, and Asn109 together coordinate ADP. D-glucose-binding residues include Thr198, Lys199, Asn233, and Asp234. The tract at residues 233–477 (NDGVGTLAGA…SHVAIKHTKD (245 aa)) is hexokinase large subdomain. Thr257 contributes to the ADP binding site. 3 residues coordinate D-glucose: Asn260, Glu287, and Glu317. Ala442 contributes to the ADP binding site.

The protein belongs to the hexokinase family.

It catalyses the reaction a D-hexose + ATP = a D-hexose 6-phosphate + ADP + H(+). It carries out the reaction D-fructose + ATP = D-fructose 6-phosphate + ADP + H(+). The catalysed reaction is D-glucose + ATP = D-glucose 6-phosphate + ADP + H(+). It participates in carbohydrate metabolism; hexose metabolism. The protein operates within carbohydrate degradation; glycolysis; D-glyceraldehyde 3-phosphate and glycerone phosphate from D-glucose: step 1/4. Functionally, fructose and glucose phosphorylating enzyme. This chain is Hexokinase-like 1 protein, found in Arabidopsis thaliana (Mouse-ear cress).